We begin with the raw amino-acid sequence, 435 residues long: Elongation factor 1-alpha (435 aa).

The region spanning 5 to 226 is the tr-type G domain; the sequence is KTHINLVVIG…DTMEPPKRPT (222 aa). Residues 14 to 21 form a G1 region; sequence GHVDSGKS. 14-21 contributes to the GTP binding site; that stretch reads GHVDSGKS. The interval 70-74 is G2; sequence GITID. A G3 region spans residues 91–94; sequence DAPG. Residues 91–95 and 151–154 each bind GTP; these read DAPGH and NKMD. The segment at 151–154 is G4; the sequence is NKMD. The interval 190-192 is G5; that stretch reads SGF.

Belongs to the TRAFAC class translation factor GTPase superfamily. Classic translation factor GTPase family. EF-Tu/EF-1A subfamily.

It localises to the cytoplasm. Its function is as follows. This protein promotes the GTP-dependent binding of aminoacyl-tRNA to the A-site of ribosomes during protein biosynthesis. The sequence is that of Elongation factor 1-alpha from Cryptosporidium parvum.